The primary structure comprises 468 residues: ATP synthase subunit beta 3 (468 aa).

Position 155–162 (G155–T162) interacts with ATP.

Belongs to the ATPase alpha/beta chains family. As to quaternary structure, F-type ATPases have 2 components, CF(1) - the catalytic core - and CF(0) - the membrane proton channel. CF(1) has five subunits: alpha(3), beta(3), gamma(1), delta(1), epsilon(1). CF(0) has three main subunits: a(1), b(2) and c(9-12). The alpha and beta chains form an alternating ring which encloses part of the gamma chain. CF(1) is attached to CF(0) by a central stalk formed by the gamma and epsilon chains, while a peripheral stalk is formed by the delta and b chains.

Its subcellular location is the cell inner membrane. The enzyme catalyses ATP + H2O + 4 H(+)(in) = ADP + phosphate + 5 H(+)(out). Produces ATP from ADP in the presence of a proton gradient across the membrane. The catalytic sites are hosted primarily by the beta subunits. This Syntrophotalea carbinolica (strain DSM 2380 / NBRC 103641 / GraBd1) (Pelobacter carbinolicus) protein is ATP synthase subunit beta 3.